Here is a 335-residue protein sequence, read N- to C-terminus: Methionine aminopeptidase 1D, mitochondrial (335 aa).

Residues 1–19 constitute a mitochondrion transit peptide; that stretch reads MAAPIGVPLLVRGGCQRIL. Residue His161 participates in substrate binding. Positions 178, 189, and 252 each coordinate a divalent metal cation. His259 serves as a coordination point for substrate. A divalent metal cation contacts are provided by Glu284 and Glu315.

It belongs to the peptidase M24A family. Methionine aminopeptidase type 1 subfamily. Co(2+) serves as cofactor. Requires Zn(2+) as cofactor. Mn(2+) is required as a cofactor. It depends on Fe(2+) as a cofactor.

Its subcellular location is the mitochondrion. The catalysed reaction is Release of N-terminal amino acids, preferentially methionine, from peptides and arylamides.. In terms of biological role, removes the N-terminal methionine from nascent proteins. The N-terminal methionine is often cleaved when the second residue in the primary sequence is small and uncharged (Met-Ala-, Cys, Gly, Pro, Ser, Thr, or Val). Requires deformylation of the N(alpha)-formylated initiator methionine before it can be hydrolyzed. The chain is Methionine aminopeptidase 1D, mitochondrial (Metap1d) from Mus musculus (Mouse).